We begin with the raw amino-acid sequence, 270 residues long: 2-aminoethanethiol dioxygenase (270 aa).

The tract at residues 21 to 48 is disordered; that stretch reads FRGSGGGRGASDRDAASGPEAPMQPGFP. Residues His-112 and His-114 each coordinate Fe cation. The disordered stretch occupies residues 140–164; sequence GGQRPRALPPEQQFEPPLQPREREA. His-193 is a Fe cation binding site. Positions 220 to 223 form a cross-link, 3'-(S-cysteinyl)-tyrosine (Cys-Tyr); sequence CHYY.

Monomer. The cofactor is Fe cation.

It carries out the reaction cysteamine + O2 = hypotaurine + H(+). The catalysed reaction is N-terminal L-cysteinyl-[protein] + O2 = N-terminal S-hydroxy-S-oxy-L-cysteinyl-[protein] + H(+). Its function is as follows. Plays a vital role in regulating thiol metabolism and preserving oxygen homeostasis by oxidizing the sulfur of cysteamine and N-terminal cysteine-containing proteins to their corresponding sulfinic acids using O2 as a cosubstrate. Catalyzes the oxidation of cysteamine (2-aminoethanethiol) to hypotaurine. Catalyzes the oxidation of regulators of G-protein signaling 4 (RGS4) and 5 (RGS5) and interleukin-32 (IL32). The polypeptide is 2-aminoethanethiol dioxygenase (ADO) (Homo sapiens (Human)).